Here is a 120-residue protein sequence, read N- to C-terminus: uncharacterized protein (120 aa).

Residues 93–109 (LCVGISTTMIIQVLFLL) traverse the membrane as a helical segment.

The protein resides in the membrane. This is an uncharacterized protein from Saccharomyces cerevisiae (strain ATCC 204508 / S288c) (Baker's yeast).